The following is a 307-amino-acid chain: Elongation factor Ts (307 aa).

The involved in Mg(2+) ion dislocation from EF-Tu stretch occupies residues 82 to 85 (TDFV).

This sequence belongs to the EF-Ts family.

It localises to the cytoplasm. In terms of biological role, associates with the EF-Tu.GDP complex and induces the exchange of GDP to GTP. It remains bound to the aminoacyl-tRNA.EF-Tu.GTP complex up to the GTP hydrolysis stage on the ribosome. This Nautilia profundicola (strain ATCC BAA-1463 / DSM 18972 / AmH) protein is Elongation factor Ts.